We begin with the raw amino-acid sequence, 272 residues long: ATP synthase subunit delta (272 aa).

This sequence belongs to the ATPase delta chain family. F-type ATPases have 2 components, F(1) - the catalytic core - and F(0) - the membrane proton channel. F(1) has five subunits: alpha(3), beta(3), gamma(1), delta(1), epsilon(1). F(0) has three main subunits: a(1), b(2) and c(10-14). The alpha and beta chains form an alternating ring which encloses part of the gamma chain. F(1) is attached to F(0) by a central stalk formed by the gamma and epsilon chains, while a peripheral stalk is formed by the delta and b chains.

The protein resides in the cell membrane. F(1)F(0) ATP synthase produces ATP from ADP in the presence of a proton or sodium gradient. F-type ATPases consist of two structural domains, F(1) containing the extramembraneous catalytic core and F(0) containing the membrane proton channel, linked together by a central stalk and a peripheral stalk. During catalysis, ATP synthesis in the catalytic domain of F(1) is coupled via a rotary mechanism of the central stalk subunits to proton translocation. Functionally, this protein is part of the stalk that links CF(0) to CF(1). It either transmits conformational changes from CF(0) to CF(1) or is implicated in proton conduction. This Corynebacterium jeikeium (strain K411) protein is ATP synthase subunit delta.